The primary structure comprises 318 residues: Pantothenate kinase (318 aa).

96–103 (GSVAVGKS) is an ATP binding site.

The protein belongs to the prokaryotic pantothenate kinase family.

It localises to the cytoplasm. It carries out the reaction (R)-pantothenate + ATP = (R)-4'-phosphopantothenate + ADP + H(+). The protein operates within cofactor biosynthesis; coenzyme A biosynthesis; CoA from (R)-pantothenate: step 1/5. In Coxiella burnetii (strain RSA 493 / Nine Mile phase I), this protein is Pantothenate kinase.